Reading from the N-terminus, the 628-residue chain is Chaperone protein HtpG (628 aa).

Residues 1-340 (MKGQETRGFQ…SNDLPLNVSR (340 aa)) form an a; substrate-binding region. The interval 341–556 (EILQDSRVTQ…ADDMTTQMAK (216 aa)) is b. The tract at residues 557-628 (LFAAAGQAAP…IRRMNQLLNA (72 aa)) is c.

It belongs to the heat shock protein 90 family. As to quaternary structure, homodimer.

It is found in the cytoplasm. Functionally, molecular chaperone. Has ATPase activity. This Sodalis glossinidius (strain morsitans) protein is Chaperone protein HtpG.